A 68-amino-acid chain; its full sequence is DNA gyrase inhibitor YacG (68 aa).

Cys10, Cys13, Cys29, and Cys33 together coordinate Zn(2+). The segment at 45-68 (EKRIPSDTELSDSDEWSEEDPLKH) is disordered. Acidic residues predominate over residues 53–68 (ELSDSDEWSEEDPLKH).

The protein belongs to the DNA gyrase inhibitor YacG family. Interacts with GyrB. It depends on Zn(2+) as a cofactor.

Functionally, inhibits all the catalytic activities of DNA gyrase by preventing its interaction with DNA. Acts by binding directly to the C-terminal domain of GyrB, which probably disrupts DNA binding by the gyrase. This Yersinia pseudotuberculosis serotype O:1b (strain IP 31758) protein is DNA gyrase inhibitor YacG.